We begin with the raw amino-acid sequence, 269 residues long: MGRSRSRSSSRSKHSKTSKHSKKRSRSRSRSRDRERKRRSKSRESKRNRRRESRSRSRSNTATSRRDRERAASPPERIDIFGRALSKRSAVDEKQKKEEEEKKVEMERQRRIRQQEIEERLIEEETARRVEELVAKRVEEELEKRKDEIEREVLRRVEEAKRIMEKQLLEELERQRHAELAAQKAREEEEKSKREELEKILVDNNRKIADAQAKLAEDQLRIVEEQRKIHEERMKLEQERQKQQKEEQKMILGKGKSRPKLSFSLKASE.

The span at 1–57 shows a compositional bias: basic residues; it reads MGRSRSRSSSRSKHSKTSKHSKKRSRSRSRSRDRERKRRSKSRESKRNRRRESRSRS. Residues 1-70 are necessary and sufficient for RNA binding; the sequence is MGRSRSRSSS…TATSRRDRER (70 aa). Disordered regions lie at residues 1–109 and 233–269; these read MGRS…MERQ and RMKL…KASE. 3 stretches are compositionally biased toward basic and acidic residues: residues 64-80, 89-109, and 233-249; these read SRRD…RIDI, SAVD…MERQ, and RMKL…EEQK. Residues 71–269 form a necessary and sufficient for transcriptional regulation region; sequence AASPPERIDI…KLSFSLKASE (199 aa).

This sequence belongs to the ARGLU1 family.

Its subcellular location is the nucleus. It is found in the nucleus speckle. The protein localises to the chromosome. In terms of biological role, dual function regulator of gene expression; regulator of transcription and modulator of alternative splicing. General coactivator of nuclear receptor-induced gene expression. The polypeptide is Arginine and glutamate-rich protein 1-B (arglu1b) (Danio rerio (Zebrafish)).